Here is a 205-residue protein sequence, read N- to C-terminus: Probable DNA-binding protein (205 aa).

A disordered region spans residues 140–168; it reads GEGDGAPRPACPDFSTRGAETGNQGVQPG.

In Homo sapiens (Human), this protein is Probable DNA-binding protein.